The sequence spans 1000 residues: Sop-2-related protein 1 (1000 aa).

Disordered regions lie at residues 355–374 (KIMK…QYQQ), 379–422 (HQQH…GPSE), and 466–509 (APSE…VARG). The segment covering 390–404 (SSSSVPSTSSPSCSS) has biased composition (low complexity). The segment covering 406-415 (ANRKEMETVR) has biased composition (basic and acidic residues). The segment covering 489 to 502 (GPSQQQQIPGTSQQ) has biased composition (low complexity). The RNA-binding stretch occupies residues 633-720 (REQILPQQYM…LNTSSVQPSE (88 aa)). Residues 948–1000 (HRMHSQRPPSMGNSSTSSEASSTSPTNAATATSSPASNRPTTSTAQPPTLNPT) form a disordered region. The segment covering 960–992 (NSSTSSEASSTSPTNAATATSSPASNRPTTSTA) has biased composition (low complexity).

In terms of assembly, binds through its N-terminal region to the N-terminal region of sop-2.

It localises to the nucleus. Its function is as follows. Acts synergistically with sop-2 to maintain the transcriptionally repressive state of homeotic genes throughout development. Not required to initiate repression, but to maintain it during later stages of development. Also required to repress expression of other genes. Binds RNA in a sequence-independent manner. This chain is Sop-2-related protein 1 (sor-1), found in Caenorhabditis elegans.